We begin with the raw amino-acid sequence, 37 residues long: Ice-structuring protein 3 (37 aa).

The protein belongs to the type-I AFP family.

Contributes to protect fish blood from freezing at subzero sea water temperatures. Lowers the blood freezing point. Binds to nascent ice crystals and prevents further growth. The polypeptide is Ice-structuring protein 3 (Pseudopleuronectes americanus (Winter flounder)).